Consider the following 372-residue polypeptide: MIFDEDSNSIAQDSGYMAVGNAYSNGVSYISMSDHWSKLTKPSSIKVVPSGASPNKADLIIEPLESGFALTLGNALRRVMMSSLRGFAVYGVEIENVLHEFTSISGVREDVTDILLNISMMRVKLSGMNSKVLSLKVKGPCEVRSGMIPDTDDCIILNKDLLICTLDQGVDFNIKMYVNAGKGYVPAVKRKSVNKLGDIPINFIATNALYSPIKKASFKVESSRIGQFTDYDRLIMSVETDGSILPDEAVALAARILQDQFQPFINFDETDEPHKKVDAKDTLPYDSNLLRKVDELELSVRSYNCLKNDNITYIGDLVQKTESDMLRTPNFGRKSLNEINELLASMNLHLGMKIANWPPESIESLSKQYSEE.

The interval 1-268 (MIFDEDSNSI…DQFQPFINFD (268 aa)) is alpha N-terminal domain (alpha-NTD). Positions 280–372 (KDTLPYDSNL…ESLSKQYSEE (93 aa)) are alpha C-terminal domain (alpha-CTD).

This sequence belongs to the RNA polymerase alpha chain family. Homodimer. The RNAP catalytic core consists of 2 alpha, 1 beta, 1 beta' and 1 omega subunit. When a sigma factor is associated with the core the holoenzyme is formed, which can initiate transcription.

The enzyme catalyses RNA(n) + a ribonucleoside 5'-triphosphate = RNA(n+1) + diphosphate. Functionally, DNA-dependent RNA polymerase catalyzes the transcription of DNA into RNA using the four ribonucleoside triphosphates as substrates. This is DNA-directed RNA polymerase subunit alpha from Ehrlichia chaffeensis (strain ATCC CRL-10679 / Arkansas).